The primary structure comprises 427 residues: Septin-8-B (427 aa).

The 267-residue stretch at 39 to 305 folds into the Septin-type G domain; sequence QGFCFNILCV…ELYRRCKLEE (267 aa). A G1 motif region spans residues 49–56; that stretch reads GETGIGKS. Residues 49–56, G104, 185–193, G239, and R254 each bind GTP; these read GETGIGKS and KADTISKSE. The tract at residues 101–104 is G3 motif; the sequence is DTVG. A G4 motif region spans residues 184-187; sequence AKAD. The stretch at 320–407 forms a coiled coil; the sequence is LQETYEAKRK…RRKVAMETLQ (88 aa). The span at 406-418 shows a compositional bias: polar residues; the sequence is LQSQSFQATSQQP. The segment at 406–427 is disordered; it reads LQSQSFQATSQQPLKKDKDRKN.

This sequence belongs to the TRAFAC class TrmE-Era-EngA-EngB-Septin-like GTPase superfamily. Septin GTPase family.

The polypeptide is Septin-8-B (sept8-b) (Xenopus laevis (African clawed frog)).